A 307-amino-acid polypeptide reads, in one-letter code: Methionyl-tRNA formyltransferase (307 aa).

Residue 109 to 112 coordinates (6S)-5,6,7,8-tetrahydrofolate; sequence SLLP.

The protein belongs to the Fmt family.

It carries out the reaction L-methionyl-tRNA(fMet) + (6R)-10-formyltetrahydrofolate = N-formyl-L-methionyl-tRNA(fMet) + (6S)-5,6,7,8-tetrahydrofolate + H(+). Functionally, attaches a formyl group to the free amino group of methionyl-tRNA(fMet). The formyl group appears to play a dual role in the initiator identity of N-formylmethionyl-tRNA by promoting its recognition by IF2 and preventing the misappropriation of this tRNA by the elongation apparatus. This Dechloromonas aromatica (strain RCB) protein is Methionyl-tRNA formyltransferase.